Consider the following 378-residue polypeptide: Queuine tRNA-ribosyltransferase (378 aa).

D89 serves as the catalytic Proton acceptor. Substrate-binding positions include 89 to 93 (DSGGF), D143, Q194, and G221. Residues 252-258 (GVGTPAN) form an RNA binding region. D271 acts as the Nucleophile in catalysis. Zn(2+) contacts are provided by C309, C311, C314, and H340.

Belongs to the queuine tRNA-ribosyltransferase family. As to quaternary structure, homodimer. Within each dimer, one monomer is responsible for RNA recognition and catalysis, while the other monomer binds to the replacement base PreQ1. Zn(2+) is required as a cofactor.

The catalysed reaction is 7-aminomethyl-7-carbaguanine + guanosine(34) in tRNA = 7-aminomethyl-7-carbaguanosine(34) in tRNA + guanine. It functions in the pathway tRNA modification; tRNA-queuosine biosynthesis. Functionally, catalyzes the base-exchange of a guanine (G) residue with the queuine precursor 7-aminomethyl-7-deazaguanine (PreQ1) at position 34 (anticodon wobble position) in tRNAs with GU(N) anticodons (tRNA-Asp, -Asn, -His and -Tyr). Catalysis occurs through a double-displacement mechanism. The nucleophile active site attacks the C1' of nucleotide 34 to detach the guanine base from the RNA, forming a covalent enzyme-RNA intermediate. The proton acceptor active site deprotonates the incoming PreQ1, allowing a nucleophilic attack on the C1' of the ribose to form the product. After dissociation, two additional enzymatic reactions on the tRNA convert PreQ1 to queuine (Q), resulting in the hypermodified nucleoside queuosine (7-(((4,5-cis-dihydroxy-2-cyclopenten-1-yl)amino)methyl)-7-deazaguanosine). This Lachnospira eligens (strain ATCC 27750 / DSM 3376 / VPI C15-48 / C15-B4) (Eubacterium eligens) protein is Queuine tRNA-ribosyltransferase.